The sequence spans 441 residues: Nucleolar and spindle-associated protein 1 (441 aa).

Disordered stretches follow at residues 47 to 186 (ARKG…PNFK) and 216 to 267 (MNEL…LGLK). 2 stretches are compositionally biased toward polar residues: residues 56-74 (ESQT…ISNQ) and 100-116 (DSQQ…PTEF). The segment covering 117 to 126 (QNHEKQESQD) has biased composition (basic and acidic residues). S124 carries the phosphoserine; by ATM modification. S135 bears the Phosphoserine mark. The span at 152–171 (RDSKVPSEGKKSLYTDESSK) shows a compositional bias: basic and acidic residues. Phosphothreonine is present on T182. Residues 237–382 (GRLSVASTPI…HKGKLKPWGQ (146 aa)) form an interaction with microtubules region. S240 carries the post-translational modification Phosphoserine. The span at 241-264 (VASTPISQRRSQGRSCGPASQSTL) shows a compositional bias: polar residues. Position 244 is a phosphothreonine (T244). Phosphoserine is present on residues S247, S255, S269, S276, and S311. Positions 286–319 (AATKDNEHKRSLTKTPARKSAHVTVSGGTPKGEA) are disordered. Phosphothreonine is present on residues T314, T338, and T349. 2 positions are modified to phosphoserine: S352 and S363. The KEN box motif lies at 384–390 (KENNYLN). Residues 401–427 (KTYKQPHLQTKEEQRKKREQERKEKKA) form a disordered region. A coiled-coil region spans residues 407–432 (HLQTKEEQRKKREQERKEKKAKVLGM). Basic and acidic residues predominate over residues 409 to 424 (QTKEEQRKKREQERKE). Position 411 is an N6-acetyllysine (K411).

Belongs to the NUSAP family. Interacts with DNA and microtubules. Microtubule bundling is inhibited by IPO7, KPNA2 and KPNB1 while association with DNA is also inhibited by IPO7 and KPNA2. Ubiquitinated. Ubiquitination by FZR1 may lead to proteasome-dependent degradation of this protein. Post-translationally, phosphorylation by ATM in G2/M-phase induces mitotic arrest.

It is found in the cytoplasm. It localises to the nucleus. The protein localises to the nucleolus. Its subcellular location is the cytoskeleton. The protein resides in the spindle. It is found in the chromosome. In terms of biological role, microtubule-associated protein with the capacity to bundle and stabilize microtubules. May associate with chromosomes and promote the organization of mitotic spindle microtubules around them. The protein is Nucleolar and spindle-associated protein 1 (NUSAP1) of Homo sapiens (Human).